Consider the following 413-residue polypeptide: Gamma-glutamyl phosphate reductase (413 aa).

Belongs to the gamma-glutamyl phosphate reductase family.

Its subcellular location is the cytoplasm. The catalysed reaction is L-glutamate 5-semialdehyde + phosphate + NADP(+) = L-glutamyl 5-phosphate + NADPH + H(+). The protein operates within amino-acid biosynthesis; L-proline biosynthesis; L-glutamate 5-semialdehyde from L-glutamate: step 2/2. Functionally, catalyzes the NADPH-dependent reduction of L-glutamate 5-phosphate into L-glutamate 5-semialdehyde and phosphate. The product spontaneously undergoes cyclization to form 1-pyrroline-5-carboxylate. This Lactococcus lactis subsp. lactis (strain IL1403) (Streptococcus lactis) protein is Gamma-glutamyl phosphate reductase.